Here is a 267-residue protein sequence, read N- to C-terminus: ATP synthase subunit a (267 aa).

The next 5 membrane-spanning stretches (helical) occupy residues 38–58, 98–118, 145–165, 208–228, and 238–258; these read WHID…FVFY, IAPL…MDLI, NITF…SIKI, LFGN…MPWW, and AIFH…LTIV.

This sequence belongs to the ATPase A chain family. In terms of assembly, F-type ATPases have 2 components, CF(1) - the catalytic core - and CF(0) - the membrane proton channel. CF(1) has five subunits: alpha(3), beta(3), gamma(1), delta(1), epsilon(1). CF(0) has three main subunits: a(1), b(2) and c(9-12). The alpha and beta chains form an alternating ring which encloses part of the gamma chain. CF(1) is attached to CF(0) by a central stalk formed by the gamma and epsilon chains, while a peripheral stalk is formed by the delta and b chains.

It is found in the cell inner membrane. In terms of biological role, key component of the proton channel; it plays a direct role in the translocation of protons across the membrane. The protein is ATP synthase subunit a of Psychromonas ingrahamii (strain DSM 17664 / CCUG 51855 / 37).